A 151-amino-acid polypeptide reads, in one-letter code: Endoribonuclease YbeY (151 aa).

Residues histidine 114, histidine 118, and histidine 124 each contribute to the Zn(2+) site.

The protein belongs to the endoribonuclease YbeY family. It depends on Zn(2+) as a cofactor.

It is found in the cytoplasm. In terms of biological role, single strand-specific metallo-endoribonuclease involved in late-stage 70S ribosome quality control and in maturation of the 3' terminus of the 16S rRNA. The protein is Endoribonuclease YbeY of Hamiltonella defensa subsp. Acyrthosiphon pisum (strain 5AT).